Consider the following 214-residue polypeptide: Proteasome subunit beta (214 aa).

A propeptide spans 1–11 (MLDTSQEIMKG) (removed in mature form; by autocatalysis). Thr-12 acts as the Nucleophile in catalysis.

Belongs to the peptidase T1B family. The 20S proteasome core is composed of 14 alpha and 14 beta subunits that assemble into four stacked heptameric rings, resulting in a barrel-shaped structure. The two inner rings, each composed of seven catalytic beta subunits, are sandwiched by two outer rings, each composed of seven alpha subunits. The catalytic chamber with the active sites is on the inside of the barrel. Has a gated structure, the ends of the cylinder being occluded by the N-termini of the alpha-subunits. Is capped at one or both ends by the proteasome regulatory ATPase, PAN.

It is found in the cytoplasm. It catalyses the reaction Cleavage of peptide bonds with very broad specificity.. The formation of the proteasomal ATPase PAN-20S proteasome complex, via the docking of the C-termini of PAN into the intersubunit pockets in the alpha-rings, triggers opening of the gate for substrate entry. Interconversion between the open-gate and close-gate conformations leads to a dynamic regulation of the 20S proteasome proteolysis activity. Functionally, component of the proteasome core, a large protease complex with broad specificity involved in protein degradation. This chain is Proteasome subunit beta, found in Methanoculleus marisnigri (strain ATCC 35101 / DSM 1498 / JR1).